The following is a 593-amino-acid chain: ATPase family AAA domain-containing protein 3-A (593 aa).

The tract at residues 1–64 is disordered; it reads MSWLFGLNKG…AKAARELDQS (64 aa). Over 1–242 the chain is Mitochondrial intermembrane; the sequence is MSWLFGLNKG…FRTFISDWDK (242 aa). The span at 15–27 shows a compositional bias: pro residues; that stretch reads PGVPGFPEPPSPP. Basic and acidic residues-rich tracts occupy residues 33 to 44 and 53 to 64; these read GGDKNKPKDKWS and RAAKAARELDQS. The stretch at 52–215 forms a coiled coil; sequence ERAAKAAREL…QIRLKAAEHR (164 aa). The chain crosses the membrane as a helical span at residues 243–260; the sequence is VTATVAGLTLLAVGVYTA. The Mitochondrial matrix segment spans residues 261-593; that stretch reads KNATGVAGRY…LQPLLEGTQV (333 aa). Residue 348–355 coordinates ATP; the sequence is GPPGTGKT.

The protein belongs to the AAA ATPase family. Can form homooligomers. Homodimer formation at the N-terminus may be regulated by ATP and is required for the interaction with the inner surface of the mitochondrial outer membrane and correct mitochondrial homeostasis.

Its subcellular location is the mitochondrion inner membrane. The protein localises to the mitochondrion matrix. The protein resides in the mitochondrion nucleoid. The catalysed reaction is ATP + H2O = ADP + phosphate + H(+). Essential for mitochondrial network organization, mitochondrial metabolism and cell growth at organism and cellular level. May play an important role in mitochondrial protein synthesis. May also participate in mitochondrial DNA replication. May bind to mitochondrial DNA D-loops and contribute to nucleoid stability. Required for enhanced channeling of cholesterol for hormone-dependent steroidogenesis. Involved in mitochondrial-mediated antiviral innate immunity. Required to protect mitochondria from the PERK-mediated unfolded protein response: specifically inhibits the activity of EIF2AK3/PERK at mitochondria-endoplasmic reticulum contact sites, thereby providing a safe haven for mitochondrial protein translation during endoplasmic reticulum stress. Ability to inhibit EIF2AK3/PERK is independent of its ATPase activity. Also involved in the mitochondrial DNA damage response by promoting signaling between damaged genomes and the mitochondrial membrane, leading to activation of the integrated stress response (ISR). This is ATPase family AAA domain-containing protein 3-A (atad3-a) from Xenopus laevis (African clawed frog).